Reading from the N-terminus, the 141-residue chain is Hemoglobin subunit alpha-A (141 aa).

The region spanning 1–141 (MLSASDKANV…VGLVLTAKYR (141 aa)) is the Globin domain. His58 contacts O2. His87 is a heme b binding site.

This sequence belongs to the globin family. There are three forms of hemoglobin in Sphenodon: A, A' and D. Hb A is a tetramer of two alpha-A and two beta-1, Hb A' is a tetramer of two alpha-a and two beta-2, Hb D is a tetramer of two alpha-D and two beta-2. As to expression, red blood cells.

In terms of biological role, involved in oxygen transport from the lung to the various peripheral tissues. The protein is Hemoglobin subunit alpha-A (HBAA) of Sphenodon punctatus (Tuatara).